A 365-amino-acid polypeptide reads, in one-letter code: c-di-GMP synthase (365 aa).

This sequence belongs to the CD-NTase family. E subfamily.

It catalyses the reaction 2 GTP = 3',3'-c-di-GMP + 2 diphosphate. Its function is as follows. Cyclic nucleotide synthase (second messenger synthase) of a CBASS antivirus system. CBASS (cyclic oligonucleotide-based antiphage signaling system) provides immunity against bacteriophage. The CD-NTase protein synthesizes cyclic nucleotides in response to infection; these serve as specific second messenger signals. The signals activate a diverse range of effectors, leading to bacterial cell death and thus abortive phage infection. A type I-D(GG) CBASS system. In terms of biological role, cyclic dinucleotide synthase that catalyzes the synthesis of c-di-GMP, has no activity with other NTP substrates. The protein is c-di-GMP synthase of Flavobacteriaceae sp. genome_bin_11.